We begin with the raw amino-acid sequence, 443 residues long: Probable serine transporter (443 aa).

At 1–48 the chain is on the cytoplasmic side; sequence MEIASNKGVIADASTPAGRAGMSESEWREAIKFDSTDTGWVIMSIGMA. Residues 49 to 69 form a helical membrane-spanning segment; that stretch reads IGAGIVFLPVQVGLMGLWVFL. Residues 70–110 are Periplasmic-facing; that stretch reads LSSVIGYPAMYLFQRLFINTLAESPECKDYPSVISGYLGKN. Residues 111 to 131 traverse the membrane as a helical segment; the sequence is WGILLGALYFVMLVIWMFVYS. Topologically, residues 132 to 149 are cytoplasmic; that stretch reads TAITNDSASYLHTFGVTE. The chain crosses the membrane as a helical span at residues 150 to 170; sequence GLLSDSPFYGLVLICILVAIS. At 171-182 the chain is on the periplasmic side; the sequence is SRGEKLLFKIST. The chain crosses the membrane as a helical span at residues 183–203; that stretch reads GMVLTKLLVVAALGVSMVGMW. The Cytoplasmic portion of the chain corresponds to 204-214; sequence HLYNVGSLPPL. The chain crosses the membrane as a helical span at residues 215 to 235; that stretch reads GLLVKNAIITLPFTLTSILFI. Topologically, residues 236 to 264 are periplasmic; that stretch reads QTLSPMVISYRSREKSIEVARHKALRAMN. The chain crosses the membrane as a helical span at residues 265–285; it reads IAFGILFVTVFFYAVSFTLAM. At 286–297 the chain is on the cytoplasmic side; sequence GHDEAVKAYEQN. The next 2 membrane-spanning stretches (helical) occupy residues 298–318 and 319–339; these read ISAL…WVKV and VSVI…YLGF. At 340–367 the chain is on the cytoplasmic side; that stretch reads REATQGIVMNILRRKMPAEKINENLVQR. Residues 368–388 form a helical membrane-spanning segment; that stretch reads GIMIFAILLAWSAIVLNAPVL. S389 is a topological domain (periplasmic). Residues 390–410 form a helical membrane-spanning segment; it reads FTSICSPIFGMVGCLIPAWLV. Topologically, residues 411–421 are cytoplasmic; sequence YKVPALHKYKG. A helical membrane pass occupies residues 422-442; that stretch reads MSLYLIIVTGLLLCVSPFLAF. Position 443 (S443) is a topological domain, periplasmic.

The protein belongs to the amino acid/polyamine transporter 2 family. SdaC/TdcC subfamily.

The protein resides in the cell inner membrane. Its function is as follows. Plays a role in L-cysteine detoxification. May transport both D- and L-serine. The chain is Probable serine transporter (dlsT) from Escherichia coli (strain K12).